The primary structure comprises 354 residues: Probable L-ascorbate-6-phosphate lactonase UlaG (354 aa).

It belongs to the UlaG family. The cofactor is a divalent metal cation.

The protein resides in the cytoplasm. It carries out the reaction L-ascorbate 6-phosphate + H2O = 3-dehydro-L-gulonate 6-phosphate. It functions in the pathway cofactor degradation; L-ascorbate degradation; D-xylulose 5-phosphate from L-ascorbate: step 1/4. Probably catalyzes the hydrolysis of L-ascorbate-6-P into 3-keto-L-gulonate-6-P. Is essential for L-ascorbate utilization under anaerobic conditions. The protein is Probable L-ascorbate-6-phosphate lactonase UlaG of Escherichia coli (strain SMS-3-5 / SECEC).